We begin with the raw amino-acid sequence, 334 residues long: Putative B3 domain-containing protein At3g49610 (334 aa).

Disordered stretches follow at residues 69-89 (ERRT…GSEK) and 133-178 (DEFE…KFDP). Composition is skewed to polar residues over residues 73-84 (LGSSPTKTNTLF) and 141-157 (KSPT…SCLM). Over residues 161 to 173 (KRKRYQSSGKSKK) the composition is skewed to basic residues. Residues 229 to 334 (FNKLLRNDFL…GVLCFALEKE (106 aa)) constitute a DNA-binding region (TF-B3).

Its subcellular location is the nucleus. The polypeptide is Putative B3 domain-containing protein At3g49610 (Arabidopsis thaliana (Mouse-ear cress)).